The primary structure comprises 268 residues: Malonyl-[acyl-carrier protein] O-methyltransferase 1 (268 aa).

The protein belongs to the methyltransferase superfamily.

The catalysed reaction is malonyl-[ACP] + S-adenosyl-L-methionine = malonyl-[ACP] methyl ester + S-adenosyl-L-homocysteine. It participates in cofactor biosynthesis; biotin biosynthesis. Functionally, converts the free carboxyl group of a malonyl-thioester to its methyl ester by transfer of a methyl group from S-adenosyl-L-methionine (SAM). It allows to synthesize pimeloyl-ACP via the fatty acid synthetic pathway. The chain is Malonyl-[acyl-carrier protein] O-methyltransferase 1 from Ilyobacter polytropus (strain ATCC 51220 / DSM 2926 / LMG 16218 / CuHBu1).